The sequence spans 180 residues: Thebaine synthase 1 (180 aa).

Serine 96 serves as a coordination point for thebaine. Histidine 111 functions as the Proton acceptor in the catalytic mechanism. Threonine 127 is a binding site for thebaine.

Belongs to the MLP family. In terms of assembly, homodimer (allosteric) and oligomers. As to expression, expressed in poppy latex.

It carries out the reaction (7S)-O-acetylsalutaridinol = thebaine + acetate + H(+). It functions in the pathway alkaloid biosynthesis; morphine biosynthesis. Catalyzes the formation of thebaine from (7S)-salutaridinol 7-O-acetate at the expense of labile hydroxylated by-products, which are preferentially produced by spontaneous allylic elimination. In Papaver somniferum (Opium poppy), this protein is Thebaine synthase 1.